The following is a 289-amino-acid chain: MRSIDRPGGQAARPTIGSVAGASNTRTRDARSLPDTPPLKAAAENFSFYYGQFQALKSITLPVYEKHVTALIGPSGCGKSTLLRACNRMHDLSPGNRYEGAIRLLPDNTNLLDPAVDPIEVRMRIGMVFQKPNPFPKSIYENVAYGLRIRGEKSRSVLDDRVEEALKGAALWAEVAHRLNEPAFALSGGQQQRLCIARCLATDPEVLLFDEPTSALDPIATASIEELIDQLRQKVTILIVTHNMQQAARVSDFTAYMYLGELIEFGQTRQLFVNPVRRETEDYITGRFG.

Residues 1 to 37 are disordered; the sequence is MRSIDRPGGQAARPTIGSVAGASNTRTRDARSLPDTP. Positions 41–284 constitute an ABC transporter domain; that stretch reads AAAENFSFYY…PVRRETEDYI (244 aa). 73–80 contributes to the ATP binding site; sequence GPSGCGKS.

Belongs to the ABC transporter superfamily. Phosphate importer (TC 3.A.1.7) family. As to quaternary structure, the complex is composed of two ATP-binding proteins (PstB), two transmembrane proteins (PstC and PstA) and a solute-binding protein (PstS).

Its subcellular location is the cell inner membrane. The catalysed reaction is phosphate(out) + ATP + H2O = ADP + 2 phosphate(in) + H(+). Functionally, part of the ABC transporter complex PstSACB involved in phosphate import. Responsible for energy coupling to the transport system. The polypeptide is Phosphate import ATP-binding protein PstB (Aromatoleum aromaticum (strain DSM 19018 / LMG 30748 / EbN1) (Azoarcus sp. (strain EbN1))).